The primary structure comprises 246 residues: Large ribosomal subunit protein uL3 (246 aa).

Gln151 bears the N5-methylglutamine mark.

Belongs to the universal ribosomal protein uL3 family. As to quaternary structure, part of the 50S ribosomal subunit. Forms a cluster with proteins L14 and L19. Post-translationally, methylated by PrmB.

Its function is as follows. One of the primary rRNA binding proteins, it binds directly near the 3'-end of the 23S rRNA, where it nucleates assembly of the 50S subunit. The protein is Large ribosomal subunit protein uL3 of Bartonella henselae (strain ATCC 49882 / DSM 28221 / CCUG 30454 / Houston 1) (Rochalimaea henselae).